Here is a 251-residue protein sequence, read N- to C-terminus: uncharacterized protein (251 aa).

Positions 4 to 152 constitute an N-acetyltransferase domain; the sequence is IEITKDNIED…YFQLMALTWN (149 aa).

Belongs to the acetyltransferase family.

This is an uncharacterized protein from Bacillus subtilis (strain 168).